Reading from the N-terminus, the 580-residue chain is Isocitrate lyase (580 aa).

106–108 (SGW) is a substrate binding site. Asp-177 contributes to the Mg(2+) binding site. The Proton acceptor role is filled by Cys-215. Substrate is bound by residues 216–217 (GH), Arg-252, 441–445 (NLSPS), and Thr-476. The short motif at 578-580 (SRM) is the Microbody targeting signal element.

This sequence belongs to the isocitrate lyase/PEP mutase superfamily. Isocitrate lyase family. In terms of assembly, homotetramer. It depends on Mg(2+) as a cofactor.

It is found in the glyoxysome. The enzyme catalyses D-threo-isocitrate = glyoxylate + succinate. It functions in the pathway carbohydrate metabolism; glyoxylate cycle; (S)-malate from isocitrate: step 1/2. Functionally, involved in storage lipid mobilization during the growth of higher plant seedling. This is Isocitrate lyase (ICL 8) from Pinus taeda (Loblolly pine).